Consider the following 189-residue polypeptide: Interferon alpha-7 (189 aa).

An N-terminal signal peptide occupies residues 1-23; that stretch reads MARSFSLLMVVLVLSYKSICSLG. Disulfide bonds link Cys24-Cys122 and Cys52-Cys162.

This sequence belongs to the alpha/beta interferon family.

It localises to the secreted. Its function is as follows. Produced by macrophages, IFN-alpha have antiviral activities. Interferon stimulates the production of two enzymes: a protein kinase and an oligoadenylate synthetase. The sequence is that of Interferon alpha-7 (IFNA7) from Homo sapiens (Human).